The sequence spans 113 residues: U11-theraphotoxin-Hhn1e (113 aa).

Residues 1–21 (MNTVRVTFLLVFVLAVSLGQA) form the signal peptide. Positions 22-74 (DKDENRMEMLEKTEQGKSYLDFAENLLLQKLEELEARLLEEDSEESRNSRQKR) are excised as a propeptide. Residues 60–69 (LEEDSEESRN) show a composition bias toward basic and acidic residues. A disordered region spans residues 60–87 (LEEDSEESRNSRQKRCIGEGVPRDENDP). Disulfide bonds link Cys75–Cys90 and Cys89–Cys110.

It belongs to the neurotoxin 14 (magi-1) family. 01 (HNTX-16) subfamily. Expressed by the venom gland.

The protein resides in the secreted. Functionally, probable ion channel inhibitor. In Cyriopagopus hainanus (Chinese bird spider), this protein is U11-theraphotoxin-Hhn1e.